We begin with the raw amino-acid sequence, 292 residues long: tRNA pseudouridine synthase B (292 aa).

D38 acts as the Nucleophile in catalysis.

The protein belongs to the pseudouridine synthase TruB family. Type 1 subfamily.

It carries out the reaction uridine(55) in tRNA = pseudouridine(55) in tRNA. Functionally, responsible for synthesis of pseudouridine from uracil-55 in the psi GC loop of transfer RNAs. The chain is tRNA pseudouridine synthase B from Gloeobacter violaceus (strain ATCC 29082 / PCC 7421).